We begin with the raw amino-acid sequence, 782 residues long: E3 UFM1-protein ligase 1 homolog (782 aa).

The disordered stretch occupies residues 404–478 (NVSTQELEDE…SRGGGGASKK (75 aa)).

The protein belongs to the UFL1 family.

Functionally, E3 UFM1-protein ligase that mediates ufmylation of target proteins. The protein is E3 UFM1-protein ligase 1 homolog of Drosophila melanogaster (Fruit fly).